The primary structure comprises 277 residues: Sulfur carrier protein FdhD (277 aa).

Cys123 functions as the Cysteine persulfide intermediate in the catalytic mechanism. 263 to 268 (FVRGNK) contacts Mo-bis(molybdopterin guanine dinucleotide).

The protein belongs to the FdhD family.

Its subcellular location is the cytoplasm. Functionally, required for formate dehydrogenase (FDH) activity. Acts as a sulfur carrier protein that transfers sulfur from IscS to the molybdenum cofactor prior to its insertion into FDH. The sequence is that of Sulfur carrier protein FdhD from Corynebacterium efficiens (strain DSM 44549 / YS-314 / AJ 12310 / JCM 11189 / NBRC 100395).